The sequence spans 581 residues: MRNHVSRYLTALIAVGCAATTAACTSLPSNSEPQALRSFEASASEEPQGPVEDQEPDLLLRDFYEANNNPQQRYSLARRYLTHRASQSWNPAPETLVLDGIEINSAADSSTKNRRYDVRGLIVGSIGEGGEYRPRNERYSTTIGLEKVDGQWRISTLPDQIVVQRNELWNHYRQKQVYFFDTSGTTLVADRRWIFQEKMGHNDNHESALLSLILTGPSKSLAPGVVNEVPSGAAYAGYHDDYYQFTGLSSLDEDSLKRLTAQSVWTLALAEVPGPYRFKFDGATMKSPINGSEDLTVDDFAEYNPLPQQAVDSGLYAFNSNGVKKLNQGVATPTTGTLGNTHNIESMAVSAKTGATAAVRTAVEGDAKTSTLMLGPIGGQFVDVLKARRLTSPSFELSSSSLWVVKDSDQVVRLSRSSENEGIVETVVDTSELGSLGKNISALQLSRSGVRAAFIVDGSVYTATVARPNPGQRKLVNVQEIIPSLANVAQSLAWQPNGSLIIGTSKPDAPVWIVAQDGSLGSKLSAGNIVAPVMNVAASQSTLYISDARAALELPNSDTSTTYWREVQGLEGSRSVLVVPR.

The signal sequence occupies residues 1–23 (MRNHVSRYLTALIAVGCAATTAA). Cysteine 24 is lipidated: N-palmitoyl cysteine. Cysteine 24 carries the S-diacylglycerol cysteine lipid modification.

It belongs to the LpqB lipoprotein family.

The protein resides in the cell membrane. This Corynebacterium diphtheriae (strain ATCC 700971 / NCTC 13129 / Biotype gravis) protein is Lipoprotein LpqB.